A 127-amino-acid polypeptide reads, in one-letter code: Small ribosomal subunit protein uS13 (127 aa).

A disordered region spans residues Arg93 to Thr127.

This sequence belongs to the universal ribosomal protein uS13 family. Part of the 30S ribosomal subunit. Forms a loose heterodimer with protein S19. Forms two bridges to the 50S subunit in the 70S ribosome.

In terms of biological role, located at the top of the head of the 30S subunit, it contacts several helices of the 16S rRNA. In the 70S ribosome it contacts the 23S rRNA (bridge B1a) and protein L5 of the 50S subunit (bridge B1b), connecting the 2 subunits; these bridges are implicated in subunit movement. Contacts the tRNAs in the A and P-sites. This chain is Small ribosomal subunit protein uS13, found in Acidobacterium capsulatum (strain ATCC 51196 / DSM 11244 / BCRC 80197 / JCM 7670 / NBRC 15755 / NCIMB 13165 / 161).